Consider the following 679-residue polypeptide: tRNA uridine 5-carboxymethylaminomethyl modification enzyme MnmG (679 aa).

13 to 18 (GGGHAG) provides a ligand contact to FAD. 280–294 (GPRYCPSVEDKINRF) serves as a coordination point for NAD(+).

It belongs to the MnmG family. As to quaternary structure, homodimer. Heterotetramer of two MnmE and two MnmG subunits. FAD is required as a cofactor.

The protein localises to the cytoplasm. Functionally, NAD-binding protein involved in the addition of a carboxymethylaminomethyl (cmnm) group at the wobble position (U34) of certain tRNAs, forming tRNA-cmnm(5)s(2)U34. This Albidiferax ferrireducens (strain ATCC BAA-621 / DSM 15236 / T118) (Rhodoferax ferrireducens) protein is tRNA uridine 5-carboxymethylaminomethyl modification enzyme MnmG.